The sequence spans 404 residues: Probable tRNA sulfurtransferase (404 aa).

In terms of domain architecture, THUMP spans 60-165; that stretch reads TAVAESLKQV…EEAAYLSYET (106 aa). Residues 183–184, 208–209, Arg-265, Gly-287, and Gln-296 contribute to the ATP site; these read ML and HF.

Belongs to the ThiI family.

Its subcellular location is the cytoplasm. It catalyses the reaction [ThiI sulfur-carrier protein]-S-sulfanyl-L-cysteine + a uridine in tRNA + 2 reduced [2Fe-2S]-[ferredoxin] + ATP + H(+) = [ThiI sulfur-carrier protein]-L-cysteine + a 4-thiouridine in tRNA + 2 oxidized [2Fe-2S]-[ferredoxin] + AMP + diphosphate. It carries out the reaction [ThiS sulfur-carrier protein]-C-terminal Gly-Gly-AMP + S-sulfanyl-L-cysteinyl-[cysteine desulfurase] + AH2 = [ThiS sulfur-carrier protein]-C-terminal-Gly-aminoethanethioate + L-cysteinyl-[cysteine desulfurase] + A + AMP + 2 H(+). It participates in cofactor biosynthesis; thiamine diphosphate biosynthesis. Catalyzes the ATP-dependent transfer of a sulfur to tRNA to produce 4-thiouridine in position 8 of tRNAs, which functions as a near-UV photosensor. Also catalyzes the transfer of sulfur to the sulfur carrier protein ThiS, forming ThiS-thiocarboxylate. This is a step in the synthesis of thiazole, in the thiamine biosynthesis pathway. The sulfur is donated as persulfide by IscS. The chain is Probable tRNA sulfurtransferase from Streptococcus pneumoniae (strain ATCC 700669 / Spain 23F-1).